The primary structure comprises 170 residues: Archaemetzincin (170 aa).

Zn(2+) is bound at residue histidine 110. Glutamate 111 serves as the catalytic Proton acceptor. Zn(2+) contacts are provided by histidine 114, histidine 120, cysteine 121, cysteine 125, cysteine 144, and cysteine 147.

The protein belongs to the peptidase M54 family. Monomer. Requires Zn(2+) as cofactor.

Functionally, probable zinc metalloprotease whose natural substrate is unknown. The protein is Archaemetzincin of Nanoarchaeum equitans (strain Kin4-M).